Here is a 609-residue protein sequence, read N- to C-terminus: Non-structural glycoprotein (609 aa).

The N-terminal stretch at 1-24 (MDFLRQCTLIQVMILAITIRLTHG) is a signal peptide. At 25–581 (GWTNFPESCV…EKDYWHEEYN (557 aa)) the chain is on the extracellular side. 9 N-linked (GlcNAc...) asparagine; by host glycosylation sites follow: Asn-87, Asn-375, Asn-465, Asn-472, Asn-478, Asn-506, Asn-529, Asn-551, and Asn-562. The chain crosses the membrane as a helical span at residues 582–599 (MWGLSGLSFLLLLALFYN). The Cytoplasmic segment spans residues 600–609 (KIKRKIKRKS).

Belongs to the ephemerovirus glycoprotein family.

It is found in the membrane. In Adelaide River virus (ARV), this protein is Non-structural glycoprotein (GNS).